Here is a 728-residue protein sequence, read N- to C-terminus: Methionine--tRNA ligase (728 aa).

The 'HIGH' region signature appears at 13–23 (PYANGSIHLGH). Residues cysteine 144, cysteine 147, cysteine 157, and cysteine 160 each contribute to the Zn(2+) site. The 'KMSKS' region motif lies at 348–352 (KMSKS). An ATP-binding site is contributed by lysine 351. The disordered stretch occupies residues 585 to 620 (LAPAKSQQVAQAVETMEKNSSTTPAPAKEGEAGQAS). Positions 628–728 (DFGKIDLRVA…EGARPGMKVK (101 aa)) constitute a tRNA-binding domain.

The protein belongs to the class-I aminoacyl-tRNA synthetase family. MetG type 1 subfamily. In terms of assembly, homodimer. Zn(2+) serves as cofactor.

The protein resides in the cytoplasm. The catalysed reaction is tRNA(Met) + L-methionine + ATP = L-methionyl-tRNA(Met) + AMP + diphosphate. Is required not only for elongation of protein synthesis but also for the initiation of all mRNA translation through initiator tRNA(fMet) aminoacylation. This is Methionine--tRNA ligase from Nitrosospira multiformis (strain ATCC 25196 / NCIMB 11849 / C 71).